A 488-amino-acid chain; its full sequence is UDP-N-acetylmuramate--L-alanine ligase (488 aa).

127–133 (GTHGKTT) lines the ATP pocket.

The protein belongs to the MurCDEF family.

It localises to the cytoplasm. The catalysed reaction is UDP-N-acetyl-alpha-D-muramate + L-alanine + ATP = UDP-N-acetyl-alpha-D-muramoyl-L-alanine + ADP + phosphate + H(+). The protein operates within cell wall biogenesis; peptidoglycan biosynthesis. Cell wall formation. This Shewanella baltica (strain OS223) protein is UDP-N-acetylmuramate--L-alanine ligase.